The following is a 778-amino-acid chain: Preasperterpenoid A synthase PvPS (778 aa).

The interval 1–414 is terpene cyclase; it reads MAATKKSTAT…HRYNFHKPAA (414 aa). Mg(2+) contacts are provided by Asp176 and Asp180. Substrate is bound at residue Asp176. Positions 176–180 match the DDXXD 1 motif; that stretch reads DDILD. Residues 266–269, Asn310, 314–318, and 406–407 each bind substrate; these read RVIN, SWEKE, and RY. Positions 310-318 match the NSE/DTE motif; that stretch reads NDYFSWEKE. Residues 414–431 are compositionally biased toward basic and acidic residues; it reads AKENEDTDDEGAKSDDSK. Residues 415-778 are prenyltransferase; sequence KENEDTDDEG…LRLLLKRLQV (364 aa). The tract at residues 416–454 is disordered; sequence ENEDTDDEGAKSDDSKTTLNDSTDSTVVDVKTPATSGLL. Residues Lys499, Arg502, and His531 each contribute to the isopentenyl diphosphate site. Residues Asp538 and Asp542 each contribute to the Mg(2+) site. The DDXXD 2 signature appears at 538-542; it reads DDIED. Residue Arg547 participates in dimethylallyl diphosphate binding. Position 548 (Arg548) interacts with isopentenyl diphosphate. Lys625, Thr626, Gln662, Asn669, Lys679, and Lys689 together coordinate dimethylallyl diphosphate.

It in the N-terminal section; belongs to the terpene synthase family. This sequence in the C-terminal section; belongs to the FPP/GGPP synthase family. In terms of assembly, hexamer. It depends on Mg(2+) as a cofactor.

It carries out the reaction isopentenyl diphosphate + (2E,6E)-farnesyl diphosphate = (2E,6E,10E)-geranylgeranyl diphosphate + diphosphate. The enzyme catalyses isopentenyl diphosphate + (2E,6E,10E)-geranylgeranyl diphosphate = (2E,6E,10E,14E)-geranylfarnesyl diphosphate + diphosphate. It catalyses the reaction (2E,6E,10E,14E)-geranylfarnesyl diphosphate = preasperterpenoid A + diphosphate. The protein operates within secondary metabolite biosynthesis; terpenoid biosynthesis. Bifunctional sesterterpene synthase that possesses both prenyl transferase and terpene cyclase activity, converting isopentenyl diphosphate and dimethylallyl diphosphate into geranylfarnesyl diphosphate (GFPP) and further converting GFPP into preasperterpenoid A. The protein is Preasperterpenoid A synthase PvPS of Talaromyces verruculosus (Penicillium verruculosum).